A 183-amino-acid polypeptide reads, in one-letter code: MMLQPPKVLLLYAHPESQDSVANRVLLQPVQQLEHVTVHDLYAHYPDFFIDIHHEQQLLRDHQVIVFQHPLYTYSCPALLKEWLDRVLARGFANGVGGHALTGKHWRSVITTGEQEGTYRIGGYNRYPMEDILRPFELTAAMCHMHWINPMIIYWARRQKPETLASHAQAYVQWLQSPLTRGL.

Belongs to the NAD(P)H dehydrogenase (quinone) family. KefG subfamily. As to quaternary structure, interacts with KefB.

The protein resides in the cell inner membrane. It carries out the reaction a quinone + NADH + H(+) = a quinol + NAD(+). The catalysed reaction is a quinone + NADPH + H(+) = a quinol + NADP(+). Regulatory subunit of a potassium efflux system that confers protection against electrophiles. Required for full activity of KefB. The polypeptide is Glutathione-regulated potassium-efflux system ancillary protein KefG (Yersinia pestis bv. Antiqua (strain Angola)).